A 179-amino-acid polypeptide reads, in one-letter code: Natural killer cells antigen CD94 (179 aa).

Over 1-10 (MAVFKTTLWR) the chain is Cytoplasmic. The helical; Signal-anchor for type II membrane protein transmembrane segment at 11–31 (LISGTLGIICLSLMATLGILL) threads the bilayer. Over 32–179 (KNSFTKLSIE…NRYICKQQLI (148 aa)) the chain is Extracellular. Intrachain disulfides connect C58–C70 and C61–C72. One can recognise a C-type lectin domain in the interval 68–175 (YRCNCYFISS…CEDKNRYICK (108 aa)). N-linked (GlcNAc...) asparagine glycans are attached at residues N83 and N132. Intrachain disulfides connect C89/C174 and C152/C166.

In terms of assembly, can form disulfide-bonded heterodimer with NKG2 family members KLRC1 and KLRC2. KLRD1-KLRC1 heterodimer interacts with peptide-bound MHC-E-B2M heterotrimeric complex. KLRD1 plays a prominent role in directly interacting with MHC-E. KLRD1-KLRC1 interacts with much higher affinity with peptide-bound MHC-E-B2M than KLRD1-KLRC2. Interacts with the adapter protein TYROBP/DAP12; this interaction is required for cell surface expression and cell activation. As to expression, natural killer cells.

It localises to the cell membrane. Its function is as follows. Immune receptor involved in self-nonself discrimination. In complex with KLRC1 or KLRC2 on cytotoxic and regulatory lymphocyte subsets, recognizes non-classical major histocompatibility (MHC) class Ib molecule MHC-E loaded with self-peptides derived from the signal sequence of classical MHC class Ia and non-classical MHC class Ib molecules. Enables cytotoxic cells to monitor the expression of MHC class I molecules in healthy cells and to tolerate self. Primarily functions as a ligand binding subunit as it lacks the capacity to signal. KLRD1-KLRC1 acts as an immune inhibitory receptor. Key inhibitory receptor on natural killer (NK) cells that regulates their activation and effector functions. Dominantly counteracts T cell receptor signaling on a subset of memory/effector CD8-positive T cells as part of an antigen-driven response to avoid autoimmunity. On intraepithelial CD8-positive gamma-delta regulatory T cells triggers TGFB1 secretion, which in turn limits the cytotoxic programming of intraepithelial CD8-positive alpha-beta T cells, distinguishing harmless from pathogenic antigens. In MHC-E-rich tumor microenvironment, acts as an immune inhibitory checkpoint and may contribute to progressive loss of effector functions of NK cells and tumor-specific T cells, a state known as cell exhaustion. Upon MHC-E-peptide binding, transmits intracellular signals through KLRC1 immunoreceptor tyrosine-based inhibition motifs (ITIMs) by recruiting INPP5D/SHIP-1 and INPPL1/SHIP-2 tyrosine phosphatases to ITIMs, and ultimately opposing signals transmitted by activating receptors through dephosphorylation of proximal signaling molecules. In terms of biological role, KLRD1-KLRC2 acts as an immune activating receptor. On cytotoxic lymphocyte subsets recognizes MHC-E loaded with signal sequence-derived peptides from non-classical MHC class Ib MHC-G molecules, likely playing a role in the generation and effector functions of adaptive NK cells and in maternal-fetal tolerance during pregnancy. Regulates the effector functions of terminally differentiated cytotoxic lymphocyte subsets, and in particular may play a role in adaptive NK cell response to viral infection. Upon MHC-E-peptide binding, transmits intracellular signals via the adapter protein TYROBP/DAP12, triggering the phosphorylation of proximal signaling molecules and cell activation. The chain is Natural killer cells antigen CD94 (KLRD1) from Pan troglodytes (Chimpanzee).